Here is a 159-residue protein sequence, read N- to C-terminus: TAPVPACFLCLLALSSACYIQNCPRGGKRSYPDTAVRQCIPCGPGNRGNCFGPNICCGEDLGCYVGTPETLRCVEETYLPSPCEAGGKPCSSGGRCAAPGVCCSDDTCVVDSSCLDEDSERRRVTPEQNMTQMDGSASDLLLRLMHMANRQQQSKHQFY.

The first 17 residues, 1 to 17 (TAPVPACFLCLLALSSA), serve as a signal peptide directing secretion. A disulfide bridge links Cys18 with Cys23. At Gly26 the chain carries Glycine amide. Intrachain disulfides connect Cys39-Cys83, Cys42-Cys56, Cys50-Cys73, Cys57-Cys63, Cys90-Cys102, Cys96-Cys114, and Cys103-Cys108. Asn129 carries N-linked (GlcNAc...) asparagine glycosylation.

The protein belongs to the vasopressin/oxytocin family. Post-translationally, seven disulfide bonds are present in neurophysin.

It is found in the secreted. Functionally, vasotocin is an antidiuretic hormone. The chain is Vasotocin-neurophysin VT from Bufo japonicus (Japanese common toad).